Consider the following 99-residue polypeptide: Plastocyanin A'/A'' (99 aa).

Residues Ile-1 to Asn-99 form the Plastocyanin-like domain. His-37, Cys-84, His-87, and Met-92 together coordinate Cu cation.

Belongs to the plastocyanin family. Cu(2+) serves as cofactor.

The protein localises to the plastid. The protein resides in the chloroplast thylakoid membrane. Functionally, participates in electron transfer between P700 and the cytochrome b6-f complex in photosystem I. This Nicotiana tabacum (Common tobacco) protein is Plastocyanin A'/A''.